The chain runs to 366 residues: Aminomethyltransferase (366 aa).

The protein belongs to the GcvT family. The glycine cleavage system is composed of four proteins: P, T, L and H.

The catalysed reaction is N(6)-[(R)-S(8)-aminomethyldihydrolipoyl]-L-lysyl-[protein] + (6S)-5,6,7,8-tetrahydrofolate = N(6)-[(R)-dihydrolipoyl]-L-lysyl-[protein] + (6R)-5,10-methylene-5,6,7,8-tetrahydrofolate + NH4(+). The glycine cleavage system catalyzes the degradation of glycine. This Bordetella pertussis (strain Tohama I / ATCC BAA-589 / NCTC 13251) protein is Aminomethyltransferase.